We begin with the raw amino-acid sequence, 317 residues long: L-lactate dehydrogenase 1 (317 aa).

NAD(+)-binding positions include Val17, Asp38, Lys43, Tyr69, and 83-84; that span reads GA. Positions 86 and 92 each coordinate substrate. Residues Ser105, 122–124, and Ser147 contribute to the NAD(+) site; that span reads ATN. Residue 124–127 coordinates substrate; that stretch reads NPVD. 152–155 is a binding site for substrate; sequence DSAR. His179 acts as the Proton acceptor in catalysis. The residue at position 223 (Tyr223) is a Phosphotyrosine. A substrate-binding site is contributed by Thr232.

This sequence belongs to the LDH/MDH superfamily. LDH family. As to quaternary structure, homotetramer.

It localises to the cytoplasm. The catalysed reaction is (S)-lactate + NAD(+) = pyruvate + NADH + H(+). It functions in the pathway fermentation; pyruvate fermentation to lactate; (S)-lactate from pyruvate: step 1/1. Functionally, catalyzes the conversion of lactate to pyruvate (Potential). Appears to be the primary factor that allows S.aureus growth during nitrosative stress in both aerobically and anaerobically cultured cells. The polypeptide is L-lactate dehydrogenase 1 (Staphylococcus aureus (strain bovine RF122 / ET3-1)).